The sequence spans 552 residues: Putative transport protein NT01EI_3867 (552 aa).

5 helical membrane-spanning segments follow: residues 4–24 (IALT…IGNW), 26–46 (IYGV…VGHF), 65–85 (FGLI…FFSS), 90–112 (GLRL…AAIH), and 158–178 (MGYA…IWLI). 2 RCK C-terminal domains span residues 191–276 (RDFD…VIGE) and 279–361 (DTSL…IVGN). 6 consecutive transmembrane segments (helical) span residues 371–391 (MLPV…PLFI), 403–425 (AGGP…LYWF), 439–459 (IVLF…DTLL), 464–484 (VTWI…AALL), 493–513 (YLTL…LAFA), and 530–550 (VYPL…LLFW).

Belongs to the AAE transporter (TC 2.A.81) family. YidE subfamily.

It localises to the cell membrane. This chain is Putative transport protein NT01EI_3867, found in Edwardsiella ictaluri (strain 93-146).